A 250-amino-acid polypeptide reads, in one-letter code: mRNA-decapping protein g5R (250 aa).

A Nudix hydrolase domain is found at 97–243 (QKFRKNWLLP…IIGPAFNFIK (147 aa)). The short motif at 132–153 (GKPKEDESDLTCAIREFEEETG) is the Nudix box element. Residue Glu-138 participates in Mg(2+) binding. Glu-147 functions as the Nucleophile in the catalytic mechanism. The Mg(2+) site is built by Glu-151 and Asp-173.

It belongs to the Nudix hydrolase family. DIPP subfamily. In terms of assembly, interacts with host RPL23A. Mg(2+) serves as cofactor. It depends on Mn(2+) as a cofactor.

The protein localises to the host rough endoplasmic reticulum. The catalysed reaction is diphospho-myo-inositol polyphosphate + H2O = myo-inositol polyphosphate + phosphate.. Functionally, decapping enzyme required for the removal of the 5'-end m7GpppN cap tethered to viral and host mRNAs to allow their decay in cells. May therefore accelerate viral and cellular mRNA turnover to eliminate competing host mRNAs and allow stage-specific synthesis of viral proteins. Acceleration of the turnover of cellular transcripts may even promote the shutoff of host protein synthesis. In addition to the mRNA cap, g5R also efficiently hydrolyzes diphosphoinositol polyphosphates. Down-regulation of the level of PP-InsP5 (diphosphoinositol pentakisphosphate) may play a role in viral manipulation of the cellular secretory pathway, a step necessary for the formation of virions. Binds viral and cellular poly(A) mRNAs, thereby decreasing both types of mRNAs. The sequence is that of mRNA-decapping protein g5R from African swine fever virus (isolate Tick/South Africa/Pretoriuskop Pr4/1996) (ASFV).